The primary structure comprises 341 residues: TERF1-interacting nuclear factor 2 (341 aa).

At Ala-2 the chain carries N-acetylalanine. Positions 243–265 match the TBM motif; it reads HRFNLAPLGKRKSRSHWTSAKAC. Residues 249 to 255 carry the Nuclear localization signal motif; it reads PLGKRKS. A disordered region spans residues 283-341; the sequence is PAQDLSNPKSREEPGAASAASVGTEPVCTEEAKTPSRPLGKRALEETPPDSPAASRRTV.

Monomer. Found in a complex with POT1; TERF1 and TNKS1. Component of the shelterin complex (telosome) composed of TERF1, TERF2, TINF2, TERF2IP, ACD and POT1. Interacts with TERF1.

Its subcellular location is the nucleus. The protein localises to the chromosome. It localises to the telomere. In terms of biological role, component of the shelterin complex (telosome) that is involved in the regulation of telomere length and protection. Shelterin associates with arrays of double-stranded TTAGGG repeats added by telomerase and protects chromosome ends; without its protective activity, telomeres are no longer hidden from the DNA damage surveillance and chromosome ends are inappropriately processed by DNA repair pathways. Plays a role in shelterin complex assembly. This Mus musculus (Mouse) protein is TERF1-interacting nuclear factor 2 (Tinf2).